Reading from the N-terminus, the 377-residue chain is Lactosylceramide 1,3-N-acetyl-beta-D-glucosaminyltransferase A (377 aa).

The Cytoplasmic portion of the chain corresponds to 1 to 12 (MLISARRLRRCQ). A helical; Signal-anchor for type II membrane protein transmembrane segment spans residues 13-30 (FLQLLASCFVLSLMALLV). Topologically, residues 31–377 (QEDNSLISHV…DTYPCSAAWS (347 aa)) are lumenal. Residues asparagine 56, asparagine 167, and asparagine 275 are each glycosylated (N-linked (GlcNAc...) asparagine).

Belongs to the glycosyltransferase 31 family.

It localises to the golgi apparatus membrane. The catalysed reaction is a beta-D-Gal-(1-&gt;4)-beta-D-Glc-(1&lt;-&gt;1)-Cer(d18:1(4E)) + UDP-N-acetyl-alpha-D-glucosamine = a beta-D-GlcNAc-(1-&gt;3)-beta-D-Gal-(1-&gt;4)-beta-D-Glc-(1&lt;-&gt;1)-Cer(d18:1(4E)) + UDP + H(+). The enzyme catalyses a neolactoside nLc4Cer(d18:1(4E)) + UDP-N-acetyl-alpha-D-glucosamine = a neolactoside IV(3)-beta-GlcNAc-nLc4Cer(d18:1(4E)) + UDP + H(+). Its pathway is protein modification; protein glycosylation. In terms of biological role, beta-1,3-N-acetylglucosaminyltransferase that plays a key role in the synthesis of lacto- or neolacto-series carbohydrate chains on glycolipids. The protein is Lactosylceramide 1,3-N-acetyl-beta-D-glucosaminyltransferase A (b3gnt5-a) of Xenopus laevis (African clawed frog).